The sequence spans 205 residues: GTP cyclohydrolase-2 (205 aa).

Position 49–53 (49–53) interacts with GTP; the sequence is RLHSE. Residues Cys-54, Cys-65, and Cys-67 each contribute to the Zn(2+) site. GTP is bound by residues Gln-70, 92-94, and Thr-114; that span reads EGR. Residue Asp-126 is the Proton acceptor of the active site. Residue Arg-128 is the Nucleophile of the active site. The GTP site is built by Thr-149 and Lys-154.

It belongs to the GTP cyclohydrolase II family. It depends on Zn(2+) as a cofactor.

It carries out the reaction GTP + 4 H2O = 2,5-diamino-6-hydroxy-4-(5-phosphoribosylamino)-pyrimidine + formate + 2 phosphate + 3 H(+). Its pathway is cofactor biosynthesis; riboflavin biosynthesis; 5-amino-6-(D-ribitylamino)uracil from GTP: step 1/4. Functionally, catalyzes the conversion of GTP to 2,5-diamino-6-ribosylamino-4(3H)-pyrimidinone 5'-phosphate (DARP), formate and pyrophosphate. The protein is GTP cyclohydrolase-2 of Pseudomonas putida (strain ATCC 700007 / DSM 6899 / JCM 31910 / BCRC 17059 / LMG 24140 / F1).